The following is a 619-amino-acid chain: UPF0329 protein ECU01_0100/ECU01_1510/ECU08_0030 (619 aa).

Basic and acidic residues predominate over residues 350–384; sequence REEREKREKREKREESKGRGKRGAGEAKEESKEED. The tract at residues 350–428 is disordered; that stretch reads REEREKREKR…GKRKGDGHHY (79 aa). Residues 385 to 399 show a composition bias toward acidic residues; it reads GKEEEGVEAEEEESA. The segment covering 411–428 has biased composition (basic residues); sequence ARRKKSLKGKRKGDGHHY.

This sequence belongs to the UPF0329 family.

The polypeptide is UPF0329 protein ECU01_0100/ECU01_1510/ECU08_0030 (Encephalitozoon cuniculi (strain GB-M1) (Microsporidian parasite)).